A 95-amino-acid chain; its full sequence is Co-chaperonin GroES (95 aa).

This sequence belongs to the GroES chaperonin family. As to quaternary structure, heptamer of 7 subunits arranged in a ring. Interacts with the chaperonin GroEL.

Its subcellular location is the cytoplasm. In terms of biological role, together with the chaperonin GroEL, plays an essential role in assisting protein folding. The GroEL-GroES system forms a nano-cage that allows encapsulation of the non-native substrate proteins and provides a physical environment optimized to promote and accelerate protein folding. GroES binds to the apical surface of the GroEL ring, thereby capping the opening of the GroEL channel. This is Co-chaperonin GroES from Desulfatibacillum aliphaticivorans.